The chain runs to 342 residues: S-adenosylmethionine:tRNA ribosyltransferase-isomerase (342 aa).

This sequence belongs to the QueA family. In terms of assembly, monomer.

The protein localises to the cytoplasm. It catalyses the reaction 7-aminomethyl-7-carbaguanosine(34) in tRNA + S-adenosyl-L-methionine = epoxyqueuosine(34) in tRNA + adenine + L-methionine + 2 H(+). Its pathway is tRNA modification; tRNA-queuosine biosynthesis. Its function is as follows. Transfers and isomerizes the ribose moiety from AdoMet to the 7-aminomethyl group of 7-deazaguanine (preQ1-tRNA) to give epoxyqueuosine (oQ-tRNA). This Listeria monocytogenes serotype 4b (strain CLIP80459) protein is S-adenosylmethionine:tRNA ribosyltransferase-isomerase.